The following is a 608-amino-acid chain: MKTPAWSRLAGYAWGVLLWNVLVALFGAYVRATGSGAGCGAHWPTCNGEVIPRAPQVETLIEFTHRATSGLAFLSVLALFLWALRAFPKGHPARFGAGLALFFMVTESLVGASLVLFGWTADNVSRERAVVQMVHLANTYFLLAALALTAWWASGGGPLRLRGQGAVGLALFLGLLALLFLGMSGAVTALGDLLFPVGSTLEALERSLTPGEHFLVRLRVLHPLIAVSVGLYVVFAGYLVAHLRPSPLTRRLAQGLAYLYGAQLLAGLINVALKAPVWMQILHLLLAYAVWLLFVFLATSALERGAKRVELGEGGEAVHRGTGGATWRDYLALTKPRVISLLLFTALFGALIAAKGWPGLGVFLAVALGGYMMAGAANAINMVVDRDIDARMKRTAKRPTVTQRVSSRDALLFAFALAVLGFAVLWWGANLLAATLALMGLIWYVLVYTLYLKRRTWHNIVIGGAAGAFPPLVGWAAVTGELSLFAWYLFALIFFWTPVHFWALALMIQDDYRAVGVPMLPVVLGERATVIQIALYALLTALISLMPLLLGELGLLYLAASLLLNALLLLKSLALYRRPERRTAVSLYKYSMLYLALLFAAMAVDRAV.

The interval 1–304 (MKTPAWSRLA…VFLATSALER (304 aa)) is COX15/CtaA. Helical transmembrane passes span 10–30 (AGYA…GAYV), 67–87 (ATSG…LRAF), 99–119 (LALF…LFGW), 139–159 (TYFL…GGPL), 167–187 (VGLA…SGAV), 220–240 (VLHP…GYLV), 252–272 (LAQG…INVA), 277–297 (VWMQ…FVFL), 338–357 (VISL…AKGW), 362–384 (VFLA…NMVV), 411–431 (LLFA…GANL), 432–452 (LAAT…TLYL), 460–480 (IVIG…AVTG), 488–508 (YLFA…ALMI), 530–550 (VIQI…PLLL), 555–575 (LLYL…SLAL), and 584–604 (AVSL…AMAV). A protoheme IX prenyltransferase region spans residues 339–606 (ISLLLFTALF…LLFAAMAVDR (268 aa)).

This sequence in the N-terminal section; belongs to the COX15/CtaA family. In the C-terminal section; belongs to the UbiA prenyltransferase family. Protoheme IX farnesyltransferase subfamily.

It is found in the cell inner membrane. It carries out the reaction heme b + (2E,6E)-farnesyl diphosphate + H2O = Fe(II)-heme o + diphosphate. It participates in porphyrin-containing compound metabolism; heme O biosynthesis; heme O from protoheme: step 1/1. In terms of biological role, converts heme B (protoheme IX) to heme O by substitution of the vinyl group on carbon 2 of heme B porphyrin ring with a hydroxyethyl farnesyl side group. This Thermus thermophilus (strain ATCC BAA-163 / DSM 7039 / HB27) protein is Protoheme IX farnesyltransferase (ctaB).